We begin with the raw amino-acid sequence, 172 residues long: Translationally-controlled tumor protein (172 aa).

The region spanning 1 to 172 is the TCTP domain; sequence MIIYRDLISH…FKDGLEMEKC (172 aa). Phosphoserine; by PLK1 is present on serine 46. The residue at position 53 (serine 53) is a Phosphoserine. Serine 64 carries the post-translational modification Phosphoserine; by PLK1. The interval 70-172 is required for reduction of TSC22D1 protein stability; that stretch reads VDIVMNHHLQ…FKDGLEMEKC (103 aa).

It belongs to the TCTP family. As to quaternary structure, homodimer. Interacts with STEAP3. Interacts with TSC22D1; interaction results in the destabilization of TSC22D1 protein. Found in several healthy and tumoral cells including erythrocytes, hepatocytes, macrophages, platelets, keratinocytes, erythroleukemia cells, gliomas, melanomas, hepatoblastomas, and lymphomas. It cannot be detected in kidney and renal cell carcinoma (RCC). Expressed in placenta and prostate.

It localises to the cytoplasm. Its function is as follows. Involved in calcium binding and microtubule stabilization. Acts as a negative regulator of TSC22D1-mediated apoptosis, via interaction with and destabilization of TSC22D1 protein. This chain is Translationally-controlled tumor protein (TPT1), found in Homo sapiens (Human).